A 37-amino-acid polypeptide reads, in one-letter code: Cytochrome b6-f complex subunit 5 (37 aa).

Residues 5 to 25 (LLSGIVLGMIPITLAGLFVTA) form a helical membrane-spanning segment.

This sequence belongs to the PetG family. In terms of assembly, the 4 large subunits of the cytochrome b6-f complex are cytochrome b6, subunit IV (17 kDa polypeptide, PetD), cytochrome f and the Rieske protein, while the 4 small subunits are PetG, PetL, PetM and PetN. The complex functions as a dimer.

The protein resides in the plastid. The protein localises to the chloroplast thylakoid membrane. Its function is as follows. Component of the cytochrome b6-f complex, which mediates electron transfer between photosystem II (PSII) and photosystem I (PSI), cyclic electron flow around PSI, and state transitions. PetG is required for either the stability or assembly of the cytochrome b6-f complex. This chain is Cytochrome b6-f complex subunit 5, found in Mesostigma viride (Green alga).